The sequence spans 172 residues: Small ribosomal subunit protein uS5 (172 aa).

In terms of domain architecture, S5 DRBM spans 17–80 (LKEKMIAVNR…EEARRNMTKV (64 aa)).

This sequence belongs to the universal ribosomal protein uS5 family. Part of the 30S ribosomal subunit. Contacts proteins S4 and S8.

Its function is as follows. With S4 and S12 plays an important role in translational accuracy. In terms of biological role, located at the back of the 30S subunit body where it stabilizes the conformation of the head with respect to the body. This chain is Small ribosomal subunit protein uS5, found in Polaromonas sp. (strain JS666 / ATCC BAA-500).